The chain runs to 847 residues: FAST kinase domain-containing protein 1, mitochondrial (847 aa).

Lysine 360 carries the post-translational modification N6-acetyllysine. The 61-residue stretch at isoleucine 777–glutamate 837 folds into the RAP domain.

The protein belongs to the FAST kinase family. As to expression, expression detected in spleen, thymus, testis, ovary, colon, heart, smooth muscle, kidney, brain, lung, liver and white adipose tissue with highest expression in heart.

The protein resides in the mitochondrion. Involved in the down-regulation of mitochondrial MT-ND3 mRNA levels which leads to decreased respiratory complex I abundance and activity. The protein is FAST kinase domain-containing protein 1, mitochondrial (FASTKD1) of Homo sapiens (Human).